The primary structure comprises 853 residues: DNA mismatch repair protein MutS (853 aa).

An ATP-binding site is contributed by 614–621; it reads GPNMGGKS.

It belongs to the DNA mismatch repair MutS family.

Functionally, this protein is involved in the repair of mismatches in DNA. It is possible that it carries out the mismatch recognition step. This protein has a weak ATPase activity. The sequence is that of DNA mismatch repair protein MutS from Escherichia coli O127:H6 (strain E2348/69 / EPEC).